The sequence spans 257 residues: Hydroxyacylglutathione hydrolase (257 aa).

His-54, His-56, Asp-58, His-59, His-113, Asp-137, and His-175 together coordinate Zn(2+).

Belongs to the metallo-beta-lactamase superfamily. Glyoxalase II family. In terms of assembly, monomer. Zn(2+) serves as cofactor.

It catalyses the reaction an S-(2-hydroxyacyl)glutathione + H2O = a 2-hydroxy carboxylate + glutathione + H(+). Its pathway is secondary metabolite metabolism; methylglyoxal degradation; (R)-lactate from methylglyoxal: step 2/2. Its function is as follows. Thiolesterase that catalyzes the hydrolysis of S-D-lactoyl-glutathione to form glutathione and D-lactic acid. The polypeptide is Hydroxyacylglutathione hydrolase (Rippkaea orientalis (strain PCC 8801 / RF-1) (Cyanothece sp. (strain PCC 8801))).